We begin with the raw amino-acid sequence, 502 residues long: NAD(P)H-quinone oxidoreductase chain 4, chloroplastic (502 aa).

Helical transmembrane passes span 4 to 24 (YPWLTIIVLLPIPAGLLIPLL), 39 to 59 (LGICLLEFLLITHTFCYHFDI), 89 to 109 (IGLTPLTGFVTTLATLAAWPV), 115 to 132 (LFHSSMLAMYSGQVGLFT), 136 to 156 (ILLFFLMWELELIPVYLLLSM), 169 to 189 (FILYTAGGSIPLLIGALTMGL), 209 to 229 (IALEIVLYLSFFVAYAVKLPI), 244 to 264 (HYSTCMLLAGILLKMGGYGLI), 276 to 296 (SIFAPWLVIVGAFQIVYAASI), 315 to 335 (MGFVLIGIGSATNIGLNGAIL), 387 to 407 (SLALPGTSGFAAESMVFPGIV), 418 to 438 (IIITIVEAIGIILTPIYLLSM), and 466 to 486 (IFISICLLLPTIGIGLYPNLI).

It belongs to the complex I subunit 4 family.

It is found in the plastid. It localises to the chloroplast thylakoid membrane. The enzyme catalyses a plastoquinone + NADH + (n+1) H(+)(in) = a plastoquinol + NAD(+) + n H(+)(out). It catalyses the reaction a plastoquinone + NADPH + (n+1) H(+)(in) = a plastoquinol + NADP(+) + n H(+)(out). The chain is NAD(P)H-quinone oxidoreductase chain 4, chloroplastic from Huperzia lucidula (Shining clubmoss).